Reading from the N-terminus, the 393-residue chain is Succinate--CoA ligase [ADP-forming] subunit beta (393 aa).

The region spanning 9 to 245 is the ATP-grasp domain; the sequence is KMLFAQYGIP…PSQEDKCETY (237 aa). Residues lysine 46, 53–55, glutamate 99, isoleucine 102, and glutamate 107 each bind ATP; that span reads GRG. Mg(2+) contacts are provided by asparagine 200 and aspartate 214. Substrate-binding positions include asparagine 265 and 322 to 324; that span reads GIV.

It belongs to the succinate/malate CoA ligase beta subunit family. As to quaternary structure, heterotetramer of two alpha and two beta subunits. It depends on Mg(2+) as a cofactor.

The enzyme catalyses succinate + ATP + CoA = succinyl-CoA + ADP + phosphate. It catalyses the reaction GTP + succinate + CoA = succinyl-CoA + GDP + phosphate. It participates in carbohydrate metabolism; tricarboxylic acid cycle; succinate from succinyl-CoA (ligase route): step 1/1. Succinyl-CoA synthetase functions in the citric acid cycle (TCA), coupling the hydrolysis of succinyl-CoA to the synthesis of either ATP or GTP and thus represents the only step of substrate-level phosphorylation in the TCA. The beta subunit provides nucleotide specificity of the enzyme and binds the substrate succinate, while the binding sites for coenzyme A and phosphate are found in the alpha subunit. In Baumannia cicadellinicola subsp. Homalodisca coagulata, this protein is Succinate--CoA ligase [ADP-forming] subunit beta.